The primary structure comprises 79 residues: MSSCCGGKCGCGSVCSCGSGCNGCGMAPDLSYMEGSTTETLVMGVAPQKSHMEASEMGVAAENGCKCGDNCTCNPCNCK.

It belongs to the metallothionein superfamily. Type 15 family.

Functionally, metallothioneins have a high content of cysteine residues that bind various heavy metals. The chain is Metallothionein-like protein type 2 (MT1) from Malus domestica (Apple).